The following is a 1026-amino-acid chain: Multidrug resistance protein MdtC (1026 aa).

11 helical membrane passes run 15-35 (ILIAAAITLCGILGFRLLPVA), 333-353 (EVEETLAISVALVILVVFLFL), 360-380 (LIPAVAVPVSLIGTFAAMYLC), 387-407 (LSLMALTIATGFVVDDAIVVL), 431-451 (VGFTVISMSLSLVAVFLPLLL), 463-483 (FAVTLSVAIGISLVVSLTLTP), 528-548 (LVGVVFLGTVALNIWLYIAIP), 853-873 (LILIVAAIATVYIVLGILYES), 897-917 (LFNAPFSLIALIGIMLLIGIV), 953-973 (PIMMTTLAALFGALPLVLSDG), and 984-1004 (ITIVGGLVMSQLLTLYTTPVV).

It belongs to the resistance-nodulation-cell division (RND) (TC 2.A.6) family. MdtC subfamily. Part of a tripartite efflux system composed of MdtA, MdtB and MdtC. MdtC forms a heteromultimer with MdtB.

It localises to the cell inner membrane. This chain is Multidrug resistance protein MdtC, found in Salmonella paratyphi B (strain ATCC BAA-1250 / SPB7).